Reading from the N-terminus, the 335-residue chain is Glyceraldehyde-3-phosphate dehydrogenase (335 aa).

NAD(+) contacts are provided by residues 15–16 (RI) and Asp37. Residues 155 to 157 (SCT), Thr186, Arg201, 214 to 215 (TG), and Arg237 each bind D-glyceraldehyde 3-phosphate. Cys156 serves as the catalytic Nucleophile. Gln301 and Asn318 together coordinate NAD(+).

Belongs to the glyceraldehyde-3-phosphate dehydrogenase family. Homotetramer.

It localises to the cytoplasm. The catalysed reaction is D-glyceraldehyde 3-phosphate + phosphate + NADP(+) = (2R)-3-phospho-glyceroyl phosphate + NADPH + H(+). It carries out the reaction D-glyceraldehyde 3-phosphate + phosphate + NAD(+) = (2R)-3-phospho-glyceroyl phosphate + NADH + H(+). It participates in carbohydrate degradation; glycolysis; pyruvate from D-glyceraldehyde 3-phosphate: step 1/5. This is Glyceraldehyde-3-phosphate dehydrogenase (gap) from Haloarcula vallismortis (Halobacterium vallismortis).